Consider the following 737-residue polypeptide: Procollagen-lysine,2-oxoglutarate 5-dioxygenase 2 (737 aa).

A signal peptide spans 1–25 (MGDRGARPGRLMPMLALLSWAAGLG). N-linked (GlcNAc...) asparagine glycans are attached at residues Asn-63 and Asn-209. Residue Thr-320 is modified to Phosphothreonine. Position 323 is a phosphotyrosine (Tyr-323). Residues Asn-365 and Asn-522 are each glycosylated (N-linked (GlcNAc...) asparagine). A Fe2OG dioxygenase domain is found at 644-737 (KGFALLNFVV…RYIAVSFIDP (94 aa)). Fe cation contacts are provided by His-666 and Asp-668. Residue Asn-696 is glycosylated (N-linked (GlcNAc...) asparagine). At Lys-704 the chain carries N6-succinyllysine. His-718 contacts Fe cation. Asn-725 carries an N-linked (GlcNAc...) asparagine glycan. The active site involves Arg-728.

Homodimer. Requires Fe(2+) as cofactor. L-ascorbate is required as a cofactor. As to expression, is highly expressed in the heart, lung, kidney, eye, ovary and placenta.

The protein localises to the rough endoplasmic reticulum membrane. It catalyses the reaction L-lysyl-[collagen] + 2-oxoglutarate + O2 = (5R)-5-hydroxy-L-lysyl-[collagen] + succinate + CO2. Forms hydroxylysine residues in -Xaa-Lys-Gly- sequences in collagens. These hydroxylysines serve as sites of attachment for carbohydrate units and are essential for the stability of the intermolecular collagen cross-links. This Mus musculus (Mouse) protein is Procollagen-lysine,2-oxoglutarate 5-dioxygenase 2 (Plod2).